Consider the following 365-residue polypeptide: NAD(P)H-quinone oxidoreductase subunit 1, chloroplastic (365 aa).

6 helical membrane passes run 29 to 49 (IWLLVPIFTLILVIIIGVLVI), 106 to 126 (IAVISTLLSYLVIPFGYHLVL), 129 to 149 (LSIGVFLWIAISSIAPIGLLM), 250 to 270 (YSGIKFGLFYVASYLNLLVSS), 302 to 322 (IFGMTIGILITLAKAYLFLFI), and 338 to 358 (LLNLGWKFLLPISLGNLLLTT).

This sequence belongs to the complex I subunit 1 family. In terms of assembly, NDH is composed of at least 16 different subunits, 5 of which are encoded in the nucleus.

The protein localises to the plastid. It is found in the chloroplast thylakoid membrane. It carries out the reaction a plastoquinone + NADH + (n+1) H(+)(in) = a plastoquinol + NAD(+) + n H(+)(out). The enzyme catalyses a plastoquinone + NADPH + (n+1) H(+)(in) = a plastoquinol + NADP(+) + n H(+)(out). NDH shuttles electrons from NAD(P)H:plastoquinone, via FMN and iron-sulfur (Fe-S) centers, to quinones in the photosynthetic chain and possibly in a chloroplast respiratory chain. The immediate electron acceptor for the enzyme in this species is believed to be plastoquinone. Couples the redox reaction to proton translocation, and thus conserves the redox energy in a proton gradient. The chain is NAD(P)H-quinone oxidoreductase subunit 1, chloroplastic from Acorus calamus (Sweet flag).